The primary structure comprises 414 residues: Glucose-1-phosphate adenylyltransferase (414 aa).

Residues tyrosine 99, glycine 164, 181 to 182 (EK), and serine 199 each bind alpha-D-glucose 1-phosphate.

The protein belongs to the bacterial/plant glucose-1-phosphate adenylyltransferase family. In terms of assembly, homotetramer.

It carries out the reaction alpha-D-glucose 1-phosphate + ATP + H(+) = ADP-alpha-D-glucose + diphosphate. The protein operates within glycan biosynthesis; glycogen biosynthesis. Its function is as follows. Involved in the biosynthesis of ADP-glucose, a building block required for the elongation reactions to produce glycogen. Catalyzes the reaction between ATP and alpha-D-glucose 1-phosphate (G1P) to produce pyrophosphate and ADP-Glc. The polypeptide is Glucose-1-phosphate adenylyltransferase (Bifidobacterium adolescentis (strain ATCC 15703 / DSM 20083 / NCTC 11814 / E194a)).